The sequence spans 222 residues: 2-C-methyl-D-erythritol 4-phosphate cytidylyltransferase (222 aa).

The protein belongs to the IspD/TarI cytidylyltransferase family. IspD subfamily.

The catalysed reaction is 2-C-methyl-D-erythritol 4-phosphate + CTP + H(+) = 4-CDP-2-C-methyl-D-erythritol + diphosphate. The protein operates within isoprenoid biosynthesis; isopentenyl diphosphate biosynthesis via DXP pathway; isopentenyl diphosphate from 1-deoxy-D-xylulose 5-phosphate: step 2/6. Its function is as follows. Catalyzes the formation of 4-diphosphocytidyl-2-C-methyl-D-erythritol from CTP and 2-C-methyl-D-erythritol 4-phosphate (MEP). This chain is 2-C-methyl-D-erythritol 4-phosphate cytidylyltransferase, found in Porphyromonas gingivalis (strain ATCC BAA-308 / W83).